Consider the following 366-residue polypeptide: Histidinol-phosphate aminotransferase 2 (366 aa).

Lys-226 is modified (N6-(pyridoxal phosphate)lysine).

This sequence belongs to the class-II pyridoxal-phosphate-dependent aminotransferase family. Histidinol-phosphate aminotransferase subfamily. As to quaternary structure, homodimer. Requires pyridoxal 5'-phosphate as cofactor.

It catalyses the reaction L-histidinol phosphate + 2-oxoglutarate = 3-(imidazol-4-yl)-2-oxopropyl phosphate + L-glutamate. It participates in amino-acid biosynthesis; L-histidine biosynthesis; L-histidine from 5-phospho-alpha-D-ribose 1-diphosphate: step 7/9. In Haemophilus influenzae (strain ATCC 51907 / DSM 11121 / KW20 / Rd), this protein is Histidinol-phosphate aminotransferase 2 (hisC2).